Here is a 160-residue protein sequence, read N- to C-terminus: Transcription elongation factor GreA (160 aa).

Residues A50–S70 adopt a coiled-coil conformation.

Belongs to the GreA/GreB family.

In terms of biological role, necessary for efficient RNA polymerase transcription elongation past template-encoded arresting sites. The arresting sites in DNA have the property of trapping a certain fraction of elongating RNA polymerases that pass through, resulting in locked ternary complexes. Cleavage of the nascent transcript by cleavage factors such as GreA or GreB allows the resumption of elongation from the new 3'terminus. GreA releases sequences of 2 to 3 nucleotides. The polypeptide is Transcription elongation factor GreA (Legionella pneumophila (strain Paris)).